The chain runs to 429 residues: Glucose-1-phosphate adenylyltransferase (429 aa).

Residues Gly-162, 177-178 (EK), and Ser-209 each bind alpha-D-glucose 1-phosphate.

Belongs to the bacterial/plant glucose-1-phosphate adenylyltransferase family. Homotetramer.

It catalyses the reaction alpha-D-glucose 1-phosphate + ATP + H(+) = ADP-alpha-D-glucose + diphosphate. Its pathway is glycan biosynthesis; glycogen biosynthesis. Involved in the biosynthesis of ADP-glucose, a building block required for the elongation reactions to produce glycogen. Catalyzes the reaction between ATP and alpha-D-glucose 1-phosphate (G1P) to produce pyrophosphate and ADP-Glc. The sequence is that of Glucose-1-phosphate adenylyltransferase from Picosynechococcus sp. (strain ATCC 27264 / PCC 7002 / PR-6) (Agmenellum quadruplicatum).